Here is a 342-residue protein sequence, read N- to C-terminus: N-acetyl-gamma-glutamyl-phosphate reductase (342 aa).

Residue C149 is part of the active site.

It belongs to the NAGSA dehydrogenase family. Type 1 subfamily.

Its subcellular location is the cytoplasm. The enzyme catalyses N-acetyl-L-glutamate 5-semialdehyde + phosphate + NADP(+) = N-acetyl-L-glutamyl 5-phosphate + NADPH + H(+). Its pathway is amino-acid biosynthesis; L-arginine biosynthesis; N(2)-acetyl-L-ornithine from L-glutamate: step 3/4. Catalyzes the NADPH-dependent reduction of N-acetyl-5-glutamyl phosphate to yield N-acetyl-L-glutamate 5-semialdehyde. This chain is N-acetyl-gamma-glutamyl-phosphate reductase, found in Laribacter hongkongensis (strain HLHK9).